The primary structure comprises 267 residues: tRNA pseudouridine synthase A (267 aa).

Asp-54 serves as the catalytic Nucleophile. Tyr-112 serves as a coordination point for substrate.

It belongs to the tRNA pseudouridine synthase TruA family. In terms of assembly, homodimer.

The enzyme catalyses uridine(38/39/40) in tRNA = pseudouridine(38/39/40) in tRNA. In terms of biological role, formation of pseudouridine at positions 38, 39 and 40 in the anticodon stem and loop of transfer RNAs. This is tRNA pseudouridine synthase A from Bordetella avium (strain 197N).